Consider the following 335-residue polypeptide: Aspartate--ammonia ligase (335 aa).

Belongs to the class-II aminoacyl-tRNA synthetase family. AsnA subfamily.

It localises to the cytoplasm. The enzyme catalyses L-aspartate + NH4(+) + ATP = L-asparagine + AMP + diphosphate + H(+). It functions in the pathway amino-acid biosynthesis; L-asparagine biosynthesis; L-asparagine from L-aspartate (ammonia route): step 1/1. The sequence is that of Aspartate--ammonia ligase from Pediococcus pentosaceus (strain ATCC 25745 / CCUG 21536 / LMG 10740 / 183-1w).